A 725-amino-acid polypeptide reads, in one-letter code: Exocyst complex component 8 (725 aa).

Residue S19 is modified to Phosphoserine. Residues A116 to Q159 form a disordered region. The segment covering G120–G129 has biased composition (gly residues). Residues Y182–R282 enclose the PH domain. Residues S285–V322 are disordered. Residues F312–V322 show a composition bias toward acidic residues.

The protein belongs to the EXO84 family. As to quaternary structure, the exocyst complex is composed of EXOC1, EXOC2, EXOC3, EXOC4, EXOC5, EXOC6, EXOC7 and EXOC8. Interacts (via PH domain) with GTP-bound RALA and RALB. Interacts with SH3BP1; required for the localization of both SH3BP1 and the exocyst to the leading edge of migrating cells.

The protein resides in the cytoplasm. Its subcellular location is the perinuclear region. It localises to the cell projection. It is found in the growth cone. Its function is as follows. Component of the exocyst complex involved in the docking of exocytic vesicles with fusion sites on the plasma membrane. This Bos taurus (Bovine) protein is Exocyst complex component 8 (EXOC8).